A 323-amino-acid polypeptide reads, in one-letter code: Porphobilinogen deaminase (323 aa).

Cys251 is modified (S-(dipyrrolylmethanemethyl)cysteine).

The protein belongs to the HMBS family. Monomer. Dipyrromethane is required as a cofactor.

It carries out the reaction 4 porphobilinogen + H2O = hydroxymethylbilane + 4 NH4(+). It participates in porphyrin-containing compound metabolism; protoporphyrin-IX biosynthesis; coproporphyrinogen-III from 5-aminolevulinate: step 2/4. The protein operates within porphyrin-containing compound metabolism; chlorophyll biosynthesis. Tetrapolymerization of the monopyrrole PBG into the hydroxymethylbilane pre-uroporphyrinogen in several discrete steps. The polypeptide is Porphobilinogen deaminase (hemC) (Nostoc sp. (strain PCC 7120 / SAG 25.82 / UTEX 2576)).